The chain runs to 178 residues: Tetratricopeptide repeat protein 9C (178 aa).

TPR repeat units lie at residues 15–48, 79–114, and 115–148; these read ASSF…LRSL, ADCY…QPEN, and VKAL…APKD.

Belongs to the TTC9 family.

The polypeptide is Tetratricopeptide repeat protein 9C (ttc9c) (Xenopus tropicalis (Western clawed frog)).